We begin with the raw amino-acid sequence, 124 residues long: Small ribosomal subunit protein uS12 (124 aa).

The interval I8–P28 is disordered. Positions S10–T19 are enriched in basic and acidic residues. D89 bears the 3-methylthioaspartic acid mark.

This sequence belongs to the universal ribosomal protein uS12 family. In terms of assembly, part of the 30S ribosomal subunit. Contacts proteins S8 and S17. May interact with IF1 in the 30S initiation complex.

Functionally, with S4 and S5 plays an important role in translational accuracy. In terms of biological role, interacts with and stabilizes bases of the 16S rRNA that are involved in tRNA selection in the A site and with the mRNA backbone. Located at the interface of the 30S and 50S subunits, it traverses the body of the 30S subunit contacting proteins on the other side and probably holding the rRNA structure together. The combined cluster of proteins S8, S12 and S17 appears to hold together the shoulder and platform of the 30S subunit. The sequence is that of Small ribosomal subunit protein uS12 from Arthrospira platensis (Spirulina platensis).